The primary structure comprises 239 residues: Major prion protein (239 aa).

An N-terminal signal peptide occupies residues 1–15; sequence MLVLFVATWSDLGLC. The segment at 15-98 is disordered; the sequence is CKKRPKPGGW…NQWNKPSKPK (84 aa). The interaction with ADGRG6 stretch occupies residues 16–31; it reads KKRPKPGGWNTGGSRY. Residues 16-222 are interaction with GRB2, ERI3 and SYN1; the sequence is KKRPKPGGWN…ESQAYYQRGS (207 aa). 5 repeat units span residues 44–51, 52–59, 60–67, 68–75, and 76–83. Residues 44–83 form a 5 X 8 AA tandem repeats of P-H-G-G-G-W-G-Q region; sequence PQSGGWGQPHGGGWGQPHGGGWGQPHGGGWGQPHGGGWGQ. The span at 47 to 87 shows a compositional bias: gly residues; sequence GGWGQPHGGGWGQPHGGGWGQPHGGGWGQPHGGGWGQGGGT. His53, Gly54, Gly55, His61, Gly62, Gly63, His69, Gly70, Gly71, His77, Gly78, and Gly79 together coordinate Cu(2+). Cysteines 171 and 206 form a disulfide. 2 N-linked (GlcNAc...) asparagine glycosylation sites follow: Asn173 and Asn189. Ser222 is lipidated: GPI-anchor amidated serine. Positions 223–239 are cleaved as a propeptide — removed in mature form; it reads SMVLFSSPPVILLISFL.

It belongs to the prion family. In terms of assembly, monomer and homodimer. Has a tendency to aggregate into amyloid fibrils containing a cross-beta spine, formed by a steric zipper of superposed beta-strands. Soluble oligomers may represent an intermediate stage on the path to fibril formation. Copper binding may promote oligomerization. Interacts with GRB2, APP, ERI3/PRNPIP and SYN1. Mislocalized cytosolically exposed PrP interacts with MGRN1; this interaction alters MGRN1 subcellular location and causes lysosomal enlargement. Interacts with APP. Interacts with KIAA1191. Interacts with ADGRG6.

It localises to the cell membrane. The protein localises to the golgi apparatus. Functionally, its primary physiological function is unclear. May play a role in neuronal development and synaptic plasticity. May be required for neuronal myelin sheath maintenance. May promote myelin homeostasis through acting as an agonist for ADGRG6 receptor. May play a role in iron uptake and iron homeostasis. Soluble oligomers are toxic to cultured neuroblastoma cells and induce apoptosis (in vitro). Association with GPC1 (via its heparan sulfate chains) targets PRNP to lipid rafts. Also provides Cu(2+) or Zn(2+) for the ascorbate-mediated GPC1 deaminase degradation of its heparan sulfate side chains. The chain is Major prion protein (PRNP) from Aotus trivirgatus (Three-striped night monkey).